Reading from the N-terminus, the 163-residue chain is 6,7-dimethyl-8-ribityllumazine synthase (163 aa).

5-amino-6-(D-ribitylamino)uracil-binding positions include Phe-27, 58–60, and 87–89; these read ALE and CVV. (2S)-2-hydroxy-3-oxobutyl phosphate is bound at residue 92–93; sequence DT. The Proton donor role is filled by His-95. Position 120 (Asn-120) interacts with 5-amino-6-(D-ribitylamino)uracil. Arg-134 contacts (2S)-2-hydroxy-3-oxobutyl phosphate.

This sequence belongs to the DMRL synthase family.

The catalysed reaction is (2S)-2-hydroxy-3-oxobutyl phosphate + 5-amino-6-(D-ribitylamino)uracil = 6,7-dimethyl-8-(1-D-ribityl)lumazine + phosphate + 2 H2O + H(+). It functions in the pathway cofactor biosynthesis; riboflavin biosynthesis; riboflavin from 2-hydroxy-3-oxobutyl phosphate and 5-amino-6-(D-ribitylamino)uracil: step 1/2. Catalyzes the formation of 6,7-dimethyl-8-ribityllumazine by condensation of 5-amino-6-(D-ribitylamino)uracil with 3,4-dihydroxy-2-butanone 4-phosphate. This is the penultimate step in the biosynthesis of riboflavin. The sequence is that of 6,7-dimethyl-8-ribityllumazine synthase from Nitrobacter hamburgensis (strain DSM 10229 / NCIMB 13809 / X14).